The chain runs to 314 residues: Methionyl-tRNA formyltransferase (314 aa).

113–116 contributes to the (6S)-5,6,7,8-tetrahydrofolate binding site; sequence SLLP.

Belongs to the Fmt family.

The catalysed reaction is L-methionyl-tRNA(fMet) + (6R)-10-formyltetrahydrofolate = N-formyl-L-methionyl-tRNA(fMet) + (6S)-5,6,7,8-tetrahydrofolate + H(+). Attaches a formyl group to the free amino group of methionyl-tRNA(fMet). The formyl group appears to play a dual role in the initiator identity of N-formylmethionyl-tRNA by promoting its recognition by IF2 and preventing the misappropriation of this tRNA by the elongation apparatus. This chain is Methionyl-tRNA formyltransferase, found in Pseudomonas aeruginosa (strain UCBPP-PA14).